The sequence spans 216 residues: Elongation factor Ts (216 aa).

An involved in Mg(2+) ion dislocation from EF-Tu region spans residues 81–84 (TDFV).

It belongs to the EF-Ts family.

It localises to the cytoplasm. Associates with the EF-Tu.GDP complex and induces the exchange of GDP to GTP. It remains bound to the aminoacyl-tRNA.EF-Tu.GTP complex up to the GTP hydrolysis stage on the ribosome. In Geobacter sulfurreducens (strain ATCC 51573 / DSM 12127 / PCA), this protein is Elongation factor Ts.